Consider the following 157-residue polypeptide: Electron transfer flavoprotein regulatory factor 1 homolog (157 aa).

Belongs to the complex I LYR family.

The protein localises to the mitochondrion. This chain is Electron transfer flavoprotein regulatory factor 1 homolog, found in Dictyostelium discoideum (Social amoeba).